A 538-amino-acid polypeptide reads, in one-letter code: Syncytin-2 (538 aa).

Positions 1 to 15 (MGLLLLVLILTPLLA) are cleaved as a signal peptide. Residues 31–478 (LLQSTGSPYS…GWLNWEGTWK (448 aa)) lie on the Extracellular side of the membrane. A CXXC motif is present at residues 43 to 46 (CWLC). Intrachain disulfides connect cysteine 43-cysteine 46, cysteine 43-cysteine 439, and cysteine 431-cysteine 438. Asparagine 133, asparagine 146, asparagine 177, asparagine 220, asparagine 241, asparagine 247, asparagine 312, and asparagine 332 each carry an N-linked (GlcNAc...) asparagine glycan. Residues 354 to 374 (FIPLLAGLGILAGTGTGIAGI) form a fusion peptide region. A CKS-17 motif is present at residues 414–430 (LQNRRGLDMLTAAQGGI). The short motif at 431 to 439 (CLALDEKCC) is the CX6CC element. N-linked (GlcNAc...) asparagine glycosylation occurs at asparagine 443. The chain crosses the membrane as a helical span at residues 479 to 499 (WFSWVLPFIGPFVSLLLLLLF). The Cytoplasmic portion of the chain corresponds to 500–538 (GPCLLNLITQFVSSRLQAIKLQTNLSAGRRPRTIQESPF).

This sequence belongs to the gamma type-C retroviral envelope protein family. HERV class-I FRD env subfamily. The surface and transmembrane proteins form a heterodimer. They are attached by non-covalent interactions or by a labile interchain disulfide bond. Specific enzymatic cleavages in vivo yield the mature SU and TM proteins. Post-translationally, the CXXC motif is highly conserved across a broad range of retroviral envelope proteins. It is thought to participate in the formation of a labile disulfide bond possibly with the CX6CC motif present in the transmembrane protein.

Its subcellular location is the cell membrane. In terms of biological role, this endogenous retroviral envelope protein has retained its original fusogenic properties and participates in trophoblast fusion and the formation of a syncytium during placenta morphogenesis. The interaction with MFSD2A is apparently important for this process. Endogenous envelope proteins may have kept, lost or modified their original function during evolution and this one is unable to confer infectivity. This is Syncytin-2 (ERVFRD-1) from Hylobates moloch (Silvery gibbon).